Reading from the N-terminus, the 181-residue chain is Inner membrane-spanning protein YciB (181 aa).

The next 5 membrane-spanning stretches (helical) occupy residues 8-28, 53-73, 76-96, 121-141, and 149-169; these read FPIICFFVAYKFWGIYIATAA, ITLIFILLLGSFTLVFHNAIF, WKPTIVYWIFAIVLFGSHFFG, LSWALFFLILGVLNLFVVYNF, and FKLFGTLVLTLVFILGQAFYI.

It belongs to the YciB family.

The protein localises to the cell inner membrane. Functionally, plays a role in cell envelope biogenesis, maintenance of cell envelope integrity and membrane homeostasis. In Coxiella burnetii (strain RSA 331 / Henzerling II), this protein is Inner membrane-spanning protein YciB.